Consider the following 733-residue polypeptide: Polyribonucleotide nucleotidyltransferase (733 aa).

2 residues coordinate Mg(2+): Asp-488 and Asp-494. Positions Pro-555–Ile-614 constitute a KH domain. The 69-residue stretch at Gly-624–Lys-692 folds into the S1 motif domain. The segment covering Glu-711–Ser-722 has biased composition (basic and acidic residues). The segment at Glu-711 to Glu-733 is disordered. Residues Glu-723 to Glu-733 show a composition bias toward basic residues.

The protein belongs to the polyribonucleotide nucleotidyltransferase family. Mg(2+) is required as a cofactor.

It localises to the cytoplasm. The catalysed reaction is RNA(n+1) + phosphate = RNA(n) + a ribonucleoside 5'-diphosphate. Its function is as follows. Involved in mRNA degradation. Catalyzes the phosphorolysis of single-stranded polyribonucleotides processively in the 3'- to 5'-direction. The protein is Polyribonucleotide nucleotidyltransferase of Bartonella henselae (strain ATCC 49882 / DSM 28221 / CCUG 30454 / Houston 1) (Rochalimaea henselae).